Here is a 353-residue protein sequence, read N- to C-terminus: Photosystem II protein D1 (353 aa).

An N-acetylthreonine modification is found at Thr-2. At Thr-2 the chain carries Phosphothreonine. 3 consecutive transmembrane segments (helical) span residues 29 to 46 (YIGW…TATS), 118 to 133 (HFLL…EWEL), and 142 to 156 (WIAV…AATA). His-118 is a chlorophyll a binding site. Tyr-126 serves as a coordination point for pheophytin a. [CaMn4O5] cluster is bound by residues Asp-170 and Glu-189. Residues 197–218 (FHMLGVAGVFGGSLFSAMHGSL) traverse the membrane as a helical segment. Position 198 (His-198) interacts with chlorophyll a. Residues His-215 and 264 to 265 (SF) contribute to the a quinone site. A Fe cation-binding site is contributed by His-215. His-272 contributes to the Fe cation binding site. The chain crosses the membrane as a helical span at residues 274-288 (FLAAWPVVGIWFTAL). Residues His-332, Glu-333, Asp-342, and Ala-344 each coordinate [CaMn4O5] cluster. The propeptide occupies 345–353 (AVEAPAVNG).

It belongs to the reaction center PufL/M/PsbA/D family. In terms of assembly, PSII is composed of 1 copy each of membrane proteins PsbA, PsbB, PsbC, PsbD, PsbE, PsbF, PsbH, PsbI, PsbJ, PsbK, PsbL, PsbM, PsbT, PsbX, PsbY, PsbZ, Psb30/Ycf12, at least 3 peripheral proteins of the oxygen-evolving complex and a large number of cofactors. It forms dimeric complexes. The D1/D2 heterodimer binds P680, chlorophylls that are the primary electron donor of PSII, and subsequent electron acceptors. It shares a non-heme iron and each subunit binds pheophytin, quinone, additional chlorophylls, carotenoids and lipids. D1 provides most of the ligands for the Mn4-Ca-O5 cluster of the oxygen-evolving complex (OEC). There is also a Cl(-1) ion associated with D1 and D2, which is required for oxygen evolution. The PSII complex binds additional chlorophylls, carotenoids and specific lipids. serves as cofactor. Post-translationally, tyr-161 forms a radical intermediate that is referred to as redox-active TyrZ, YZ or Y-Z. In terms of processing, C-terminally processed by CTPA; processing is essential to allow assembly of the oxygen-evolving complex and thus photosynthetic growth.

The protein resides in the plastid. Its subcellular location is the chloroplast thylakoid membrane. The enzyme catalyses 2 a plastoquinone + 4 hnu + 2 H2O = 2 a plastoquinol + O2. Its function is as follows. Photosystem II (PSII) is a light-driven water:plastoquinone oxidoreductase that uses light energy to abstract electrons from H(2)O, generating O(2) and a proton gradient subsequently used for ATP formation. It consists of a core antenna complex that captures photons, and an electron transfer chain that converts photonic excitation into a charge separation. The D1/D2 (PsbA/PsbD) reaction center heterodimer binds P680, the primary electron donor of PSII as well as several subsequent electron acceptors. In Marchantia polymorpha (Common liverwort), this protein is Photosystem II protein D1.